The following is a 288-amino-acid chain: Borealin (288 aa).

The tract at residues 1–58 (MAPKKRSSRGTRTNTLRSRKLASFLKDFDREVQVRTKQIESDRQTLLKEVENLYNIEV) is required for interaction with INCENP. The interval 1-88 (MAPKKRSSRG…NRQALEEAAT (88 aa)) is required for centromere localization. The interval 1 to 149 (MAPKKRSSRG…RKSHKNLRSA (149 aa)) is required for interaction with SENP3. Residues 10-109 (GTRTNTLRSR…TAEAIQTPLK (100 aa)) are required to form a minimal CPC core complex that localizes to the central spindle and midbody and properly executes the role of the CPC during cytokinesis. The tract at residues 20–78 (KLASFLKDFDREVQVRTKQIESDRQTLLKEVENLYNIEVLRLPKALQVMKWLDYFALGG) is required for interaction with INCENP and BIRC5. T88 is modified (phosphothreonine; by TTK). A Citrulline modification is found at R91. The residue at position 94 (T94) is a Phosphothreonine; by TTK. A Phosphothreonine modification is found at T106. S110 carries the post-translational modification Phosphoserine. The span at 124 to 134 (KEEEEDEEEEG) shows a compositional bias: acidic residues. The interval 124 to 173 (KEEEEDEEEEGGGGGGRKSHKNLRSARVKRCPPSKKRTQSIQGRSRSKRL) is disordered. A compositionally biased stretch (basic residues) spans 140-161 (RKSHKNLRSARVKRCPPSKKRT). K144 is covalently cross-linked (Glycyl lysine isopeptide (Lys-Gly) (interchain with G-Cter in SUMO2)). S174 is modified (phosphoserine; by AURKB). Phosphothreonine occurs at positions 197 and 212. Phosphoserine is present on residues S227, S232, S246, and S252.

It belongs to the borealin family. May form homooligomers and homodimers. Component of the chromosomal passenger complex (CPC) composed of at least BIRC5/survivin, CDCA8/borealin, INCENP, AURKB or AURKC; in the complex forms a triple-helix bundle-based subcomplex with INCENP and BIRC5. Interacts with SENP3, UBE2I and RANBP2. Interacts (phosphorylated) with SGO1 and SGO2; the association is dependent on CDK1. In terms of processing, phosphorylated by TTK, essentially at Thr-88 and Thr-94. Phosphorylation (probably by CDK1) promotes targeting of the CPC to centromeric DNA. Post-translationally, sumoylated by UBE2I and RANBP2. Desumoylated by SENP3 through the removal of SUMO2 and SUMO3. Citrullinated by PADI4.

Its subcellular location is the nucleus. It localises to the nucleolus. The protein resides in the cytoplasm. It is found in the chromosome. The protein localises to the centromere. Its subcellular location is the cytoskeleton. It localises to the spindle. Component of the chromosomal passenger complex (CPC), a complex that acts as a key regulator of mitosis. The CPC complex has essential functions at the centromere in ensuring correct chromosome alignment and segregation and is required for chromatin-induced microtubule stabilization and spindle assembly. In the complex, it may be required to direct the CPC to centromeric DNA. This is Borealin (Cdca8) from Rattus norvegicus (Rat).